Here is a 376-residue protein sequence, read N- to C-terminus: D-alanine--D-alanine ligase (376 aa).

Residues 155 to 361 (KIIFEKAGIP…YPELIEKLID (207 aa)) form the ATP-grasp domain. 188 to 243 (EEKFSYPVFVKPSNAGSSVGVSKAHDKNELKEALIYAARYDRKVLIEEFINGREVE) is a binding site for ATP. Mg(2+) is bound by residues aspartate 314, glutamate 328, and asparagine 330.

The protein belongs to the D-alanine--D-alanine ligase family. Requires Mg(2+) as cofactor. Mn(2+) is required as a cofactor.

It localises to the cytoplasm. The catalysed reaction is 2 D-alanine + ATP = D-alanyl-D-alanine + ADP + phosphate + H(+). It functions in the pathway cell wall biogenesis; peptidoglycan biosynthesis. Its function is as follows. Cell wall formation. The sequence is that of D-alanine--D-alanine ligase from Acetivibrio thermocellus (strain ATCC 27405 / DSM 1237 / JCM 9322 / NBRC 103400 / NCIMB 10682 / NRRL B-4536 / VPI 7372) (Clostridium thermocellum).